Consider the following 463-residue polypeptide: Tryprostatin B synthase (463 aa).

The brevianamide F site is built by Met93 and Glu101. 3 residues coordinate dimethylallyl diphosphate: Arg112, Lys200, and Tyr202. Tyr204 is a brevianamide F binding site. Positions 293, 295, 379, 381, 445, and 449 each coordinate dimethylallyl diphosphate.

It belongs to the tryptophan dimethylallyltransferase family.

The enzyme catalyses brevianamide F + dimethylallyl diphosphate = tryprostatin B + diphosphate. It participates in mycotoxin biosynthesis. Functionally, brevianamide F prenyltransferase; part of the gene cluster that mediates the biosynthesis of fumitremorgins, indole alkaloids that carry not only intriguing chemical structures, but also interesting biological and pharmacological activities. The biosynthesis of fumitremorgin-type alkaloids begins by condensation of the two amino acids L-tryptophan and L-proline to brevianamide F, catalyzed by the non-ribosomal peptide synthetase ftmPS/ftmA. Brevianamide F is then prenylated by the prenyltransferase ftmPT1/ftmB in the presence of dimethylallyl diphosphate, resulting in the formation of tryprostatin B. The three cytochrome P450 monooxygenases, ftmP450-1/ftmC, ftmP450-2/ftmE and ftmP450-3/FtmG, are responsible for the conversion of tryprostatin B to 6-hydroxytryprostatin B, tryprostatin A to fumitremorgin C and fumitremorgin C to 12,13-dihydroxyfumitremorgin C, respectively. The putative methyltransferase ftmMT/ftmD is expected for the conversion of 6-hydroxytryprostatin B to tryprostatin A. FtmPT2/FtmH catalyzes the prenylation of 12,13-dihydroxyfumitre-morgin C in the presence of dimethylallyl diphosphate, resulting in the formation of fumitremorgin B. Fumitremorgin B is further converted to verruculogen by ftmOx1/ftmF via the insertion of an endoperoxide bond between the two prenyl moieties. Finally, verruculogen is further converted to fumitremorgin A by the verruculogen prenyltransferase ftmPT3. The sequence is that of Tryprostatin B synthase from Neosartorya fischeri (strain ATCC 1020 / DSM 3700 / CBS 544.65 / FGSC A1164 / JCM 1740 / NRRL 181 / WB 181) (Aspergillus fischerianus).